The following is a 366-amino-acid chain: CRS2-associated factor 2, mitochondrial (366 aa).

A mitochondrion-targeting transit peptide spans 1 to 14 (MLLPRDLLLLPWRR). Residues 24-82 (RRLNHHRAPPFSDPDDDPPFTRLAERPPRAPSKKKKKEEEDQGGRIRPPEPASSDLPFD) form a disordered region. Basic and acidic residues predominate over residues 60-71 (KEEEDQGGRIRP). CRM domains follow at residues 143-241 (EPLA…QRPQ) and 263-359 (DGLT…SVSL).

As to quaternary structure, part of large ribonucleo-protein complexes that include group IIB introns.

Its subcellular location is the mitochondrion. May be involved in the splicing of group IIB introns in mitochondria. The protein is CRS2-associated factor 2, mitochondrial of Oryza sativa subsp. japonica (Rice).